Reading from the N-terminus, the 260-residue chain is Neuraminyllactose-binding hemagglutinin (260 aa).

The signal sequence occupies residues 1–27 (MKTNGHFKDFAWKKCLLGASVGALLVG). The N-palmitoyl cysteine moiety is linked to residue C28. C28 is lipidated: S-diacylglycerol cysteine. The tract at residues 134 to 139 (KRTIQK) is N-acetyl-neuraminyl-alpha(2,3)-lactose binding motif.

Its subcellular location is the cell outer membrane. The chain is Neuraminyllactose-binding hemagglutinin (hpaA) from Helicobacter pylori (Campylobacter pylori).